The sequence spans 302 residues: uncharacterized protein (302 aa).

This sequence belongs to the HAD-like hydrolase superfamily.

This is an uncharacterized protein from Saccharomyces cerevisiae (strain ATCC 204508 / S288c) (Baker's yeast).